Here is a 628-residue protein sequence, read N- to C-terminus: Leucine-rich repeat and fibronectin type-III domain-containing protein 3 (628 aa).

The signal sequence occupies residues 1–16 (MAILPLLLCLLPLAPA). Topologically, residues 17–539 (SSPPQSATPS…PHAPFLGGTM (523 aa)) are extracellular. Residues 19 to 59 (PPQSATPSPCPRRCRCQTQSLPLSVLCPGAGLLFVPPSLDR) enclose the LRRNT domain. LRR repeat units lie at residues 60-83 (RAAE…ANMT), 84-105 (GLLH…AFAD), 108-129 (ALRA…QLRG), 132-153 (NLRH…ALDD), 157-178 (TLED…ALGR), 181-202 (NVNT…AFSR), and 205-226 (KLAR…PLFS). Asn81 carries an N-linked (GlcNAc...) asparagine glycan. In terms of domain architecture, LRRCT spans 249-295 (NPLHCNCELVWLRRLAREDDLEACASPPALGGRYFWAVGEEEFVCEP). Residues 295 to 382 (PPVVTHRSPP…GEATAAVELT (88 aa)) enclose the Ig-like domain. Cys317 and Cys366 are oxidised to a cystine. 3 N-linked (GlcNAc...) asparagine glycosylation sites follow: Asn339, Asn348, and Asn393. The disordered stretch occupies residues 382-430 (TVGPPPPPQLANSTSCDPPRDGDPDALTPPSAASASAKVADTGPPTDRG). The segment covering 406 to 422 (DALTPPSAASASAKVAD) has biased composition (low complexity). In terms of domain architecture, Fibronectin type-III spans 425–523 (PPTDRGVQVT…GCARFSTEPA (99 aa)). Residue Asn462 is glycosylated (N-linked (GlcNAc...) asparagine). The helical transmembrane segment at 540–560 (IIALGGVIVASVLVFIFVLLM) threads the bilayer. The Cytoplasmic segment spans residues 561–628 (RYKVHGGQPP…WGPGHEPVGP (68 aa)).

Belongs to the LRFN family. In terms of assembly, can form heteromeric complexes with LRFN1, LRFN2, LRFN4 and LRFN5. Able to form homomeric complexes across cell junctions, between adjacent cells. Does not interact with DLG4. N-glycosylated.

It is found in the cell membrane. Its subcellular location is the cell projection. It localises to the axon. The protein localises to the dendrite. The protein resides in the synapse. It is found in the presynaptic cell membrane. Its subcellular location is the postsynaptic cell membrane. In terms of biological role, cell adhesion molecule that mediates homophilic cell-cell adhesion in a Ca(2+)-independent manner. Promotes neurite outgrowth in hippocampal neurons. In Homo sapiens (Human), this protein is Leucine-rich repeat and fibronectin type-III domain-containing protein 3 (LRFN3).